A 781-amino-acid chain; its full sequence is Acyl-CoA dehydrogenase family member 11 (781 aa).

K177 carries the post-translational modification N6-acetyllysine. Y325 is subject to Phosphotyrosine. K392 is modified (N6-succinyllysine). Residues 505-515 (FCMTEPDVASS), 513-515 (ASS), 539-541 (WSS), and S541 each bind FAD. S515 contributes to the substrate binding site. 630–633 (GPGR) lines the substrate pocket. Residues R658, Q728, and 728 to 732 (QVCGG) each bind FAD. Residue G756 participates in substrate binding. Residues 757–759 (PDE) and E759 contribute to the FAD site.

It belongs to the acyl-CoA dehydrogenase family. In terms of assembly, homodimer. Requires FAD as cofactor.

The protein localises to the peroxisome. The protein resides in the mitochondrion membrane. It catalyses the reaction a 2,3-saturated acyl-CoA + oxidized [electron-transfer flavoprotein] + H(+) = a (2E)-enoyl-CoA + reduced [electron-transfer flavoprotein]. The catalysed reaction is docosanoyl-CoA + oxidized [electron-transfer flavoprotein] + H(+) = (2E)-docosenoyl-CoA + reduced [electron-transfer flavoprotein]. It carries out the reaction tetracosanoyl-CoA + oxidized [electron-transfer flavoprotein] + H(+) = (2E)-tetracosenoyl-CoA + reduced [electron-transfer flavoprotein]. The enzyme catalyses eicosanoyl-CoA + oxidized [electron-transfer flavoprotein] + H(+) = (2E)-eicosenoyl-CoA + reduced [electron-transfer flavoprotein]. It catalyses the reaction hexacosanoyl-CoA + oxidized [electron-transfer flavoprotein] + H(+) = (2E)-hexacosenoyl-CoA + reduced [electron-transfer flavoprotein]. The catalysed reaction is tricosanoyl-CoA + oxidized [electron-transfer flavoprotein] + H(+) = (2E)-tricosenoyl-CoA + reduced [electron-transfer flavoprotein]. It functions in the pathway lipid metabolism; fatty acid beta-oxidation. Acyl-CoA dehydrogenase, that exhibits maximal activity towards saturated C22-CoA. Probably participates in beta-oxydation and energy production but could also play a role in the metabolism of specific fatty acids to control fatty acids composition of cellular lipids in brain. The chain is Acyl-CoA dehydrogenase family member 11 (ACAD11) from Pongo abelii (Sumatran orangutan).